Reading from the N-terminus, the 290-residue chain is 4-hydroxybenzoate octaprenyltransferase (290 aa).

Transmembrane regions (helical) follow at residues Trp-41–Met-61, Trp-89–Leu-109, Phe-133–Phe-153, Gly-158–Tyr-178, Phe-202–Ile-224, and Trp-269–Gly-289.

Belongs to the UbiA prenyltransferase family. It depends on Mg(2+) as a cofactor.

It localises to the cell inner membrane. It carries out the reaction all-trans-octaprenyl diphosphate + 4-hydroxybenzoate = 4-hydroxy-3-(all-trans-octaprenyl)benzoate + diphosphate. Its pathway is cofactor biosynthesis; ubiquinone biosynthesis. Functionally, catalyzes the prenylation of para-hydroxybenzoate (PHB) with an all-trans polyprenyl group. Mediates the second step in the final reaction sequence of ubiquinone-8 (UQ-8) biosynthesis, which is the condensation of the polyisoprenoid side chain with PHB, generating the first membrane-bound Q intermediate 3-octaprenyl-4-hydroxybenzoate. The sequence is that of 4-hydroxybenzoate octaprenyltransferase from Burkholderia vietnamiensis (strain G4 / LMG 22486) (Burkholderia cepacia (strain R1808)).